The primary structure comprises 224 residues: MTRISREMMKDMLSVYFIMGSNNTSADPVSVVEKAIEGGATLFQFREKGSGSLTGEERLLFAKRVQDVCRQAGIPFIINDDVELALRLEADGVHIGQDDADAEETRAAIGDMILGVSAHNVSEVKRAEAAGADYVGMGPVYPTETKKDAEAVQGVTLIEEVRRQGITIPIVGIGGITADNAAPVIEAGADGVSMISAISQAEDPKAAARKFSEEIRRSKAGLSR.

4-amino-2-methyl-5-(diphosphooxymethyl)pyrimidine is bound by residues 44–48 (QFREK) and asparagine 79. Residues aspartate 80 and aspartate 99 each coordinate Mg(2+). Serine 117 provides a ligand contact to 4-amino-2-methyl-5-(diphosphooxymethyl)pyrimidine. 143 to 145 (TET) is a binding site for 2-[(2R,5Z)-2-carboxy-4-methylthiazol-5(2H)-ylidene]ethyl phosphate. 4-amino-2-methyl-5-(diphosphooxymethyl)pyrimidine is bound at residue lysine 146. Residues glycine 175 and 195–196 (IS) each bind 2-[(2R,5Z)-2-carboxy-4-methylthiazol-5(2H)-ylidene]ethyl phosphate.

Belongs to the thiamine-phosphate synthase family. The cofactor is Mg(2+).

It carries out the reaction 2-[(2R,5Z)-2-carboxy-4-methylthiazol-5(2H)-ylidene]ethyl phosphate + 4-amino-2-methyl-5-(diphosphooxymethyl)pyrimidine + 2 H(+) = thiamine phosphate + CO2 + diphosphate. The enzyme catalyses 2-(2-carboxy-4-methylthiazol-5-yl)ethyl phosphate + 4-amino-2-methyl-5-(diphosphooxymethyl)pyrimidine + 2 H(+) = thiamine phosphate + CO2 + diphosphate. It catalyses the reaction 4-methyl-5-(2-phosphooxyethyl)-thiazole + 4-amino-2-methyl-5-(diphosphooxymethyl)pyrimidine + H(+) = thiamine phosphate + diphosphate. Its pathway is cofactor biosynthesis; thiamine diphosphate biosynthesis; thiamine phosphate from 4-amino-2-methyl-5-diphosphomethylpyrimidine and 4-methyl-5-(2-phosphoethyl)-thiazole: step 1/1. Condenses 4-methyl-5-(beta-hydroxyethyl)thiazole monophosphate (THZ-P) and 2-methyl-4-amino-5-hydroxymethyl pyrimidine pyrophosphate (HMP-PP) to form thiamine monophosphate (TMP). This is Thiamine-phosphate synthase from Bacillus velezensis (strain DSM 23117 / BGSC 10A6 / LMG 26770 / FZB42) (Bacillus amyloliquefaciens subsp. plantarum).